The primary structure comprises 131 residues: Small ribosomal subunit protein uS9 (131 aa).

The protein belongs to the universal ribosomal protein uS9 family.

The protein is Small ribosomal subunit protein uS9 of Glaesserella parasuis serovar 5 (strain SH0165) (Haemophilus parasuis).